The chain runs to 607 residues: Granule-bound starch synthase 1, chloroplastic/amyloplastic (607 aa).

The N-terminal 77 residues, 1 to 77, are a transit peptide targeting the chloroplast; it reads MASITASHHF…RPGCSATIVC (77 aa). Lys-95 contacts ADP-alpha-D-glucose. The tract at residues 585-607 is disordered; sequence SGSEPGVEGEEIAPLAKENVATP.

The protein belongs to the glycosyltransferase 1 family. Bacterial/plant glycogen synthase subfamily.

It is found in the plastid. The protein localises to the chloroplast. Its subcellular location is the amyloplast. It catalyses the reaction an NDP-alpha-D-glucose + [(1-&gt;4)-alpha-D-glucosyl](n) = [(1-&gt;4)-alpha-D-glucosyl](n+1) + a ribonucleoside 5'-diphosphate + H(+). It functions in the pathway glycan biosynthesis; starch biosynthesis. This chain is Granule-bound starch synthase 1, chloroplastic/amyloplastic (WAXY), found in Solanum tuberosum (Potato).